A 178-amino-acid polypeptide reads, in one-letter code: Acireductone dioxygenase (178 aa).

H82, H84, E88, and H127 together coordinate Fe(2+). Ni(2+) is bound by residues H82, H84, E88, and H127. S157 carries the phosphoserine modification.

Belongs to the acireductone dioxygenase (ARD) family. Requires Fe(2+) as cofactor. Ni(2+) serves as cofactor.

The protein localises to the cytoplasm. It localises to the nucleus. The enzyme catalyses 1,2-dihydroxy-5-(methylsulfanyl)pent-1-en-3-one + O2 = 4-methylsulfanyl-2-oxobutanoate + formate + 2 H(+). It carries out the reaction 1,2-dihydroxy-5-(methylsulfanyl)pent-1-en-3-one + O2 = 3-(methylsulfanyl)propanoate + CO + formate + 2 H(+). It participates in amino-acid biosynthesis; L-methionine biosynthesis via salvage pathway; L-methionine from S-methyl-5-thio-alpha-D-ribose 1-phosphate: step 5/6. Catalyzes 2 different reactions between oxygen and the acireductone 1,2-dihydroxy-3-keto-5-methylthiopentene (DHK-MTPene) depending upon the metal bound in the active site. Fe-containing acireductone dioxygenase (Fe-ARD) produces formate and 2-keto-4-methylthiobutyrate (KMTB), the alpha-ketoacid precursor of methionine in the methionine recycle pathway. Ni-containing acireductone dioxygenase (Ni-ARD) produces methylthiopropionate, carbon monoxide and formate, and does not lie on the methionine recycle pathway. In Schizosaccharomyces pombe (strain 972 / ATCC 24843) (Fission yeast), this protein is Acireductone dioxygenase (adi1).